Reading from the N-terminus, the 408-residue chain is Innexin-12 (408 aa).

The chain crosses the membrane as a helical span at residues 29-49; that stretch reads TIGLVLASAFITGWSFVGSPI. Residue N99 is glycosylated (N-linked (GlcNAc...) asparagine). A run of 3 helical transmembrane segments spans residues 113–133, 197–217, and 284–304; these read QWVP…VVIW, VITS…FQFV, and IFVA…TNTI.

This sequence belongs to the pannexin family.

It is found in the cell membrane. Its subcellular location is the cell junction. The protein localises to the gap junction. Structural component of the gap junctions. Plays a role in oocyte directional transit in the spermatheca during ovulation by facilitating the directional propagation of the calcium signal in the spermatheca. Plays a role in male tail tip morphogenesis. The polypeptide is Innexin-12 (Caenorhabditis elegans).